Here is a 122-residue protein sequence, read N- to C-terminus: ATP synthase epsilon chain (122 aa).

The protein belongs to the ATPase epsilon chain family. In terms of assembly, F-type ATPases have 2 components, CF(1) - the catalytic core - and CF(0) - the membrane proton channel. CF(1) has five subunits: alpha(3), beta(3), gamma(1), delta(1), epsilon(1). CF(0) has three main subunits: a, b and c.

The protein resides in the cell membrane. Its function is as follows. Produces ATP from ADP in the presence of a proton gradient across the membrane. In Rhodococcus erythropolis (strain PR4 / NBRC 100887), this protein is ATP synthase epsilon chain.